A 218-amino-acid chain; its full sequence is Octanoyltransferase (218 aa).

Positions 34–209 (ETSRDELWIV…TFSQELGYQH (176 aa)) constitute a BPL/LPL catalytic domain. Substrate-binding positions include 73–80 (RGGQVTYH), 140–142 (SLG), and 153–155 (GLA). The Acyl-thioester intermediate role is filled by Cys-171.

This sequence belongs to the LipB family.

Its subcellular location is the cytoplasm. The enzyme catalyses octanoyl-[ACP] + L-lysyl-[protein] = N(6)-octanoyl-L-lysyl-[protein] + holo-[ACP] + H(+). It functions in the pathway protein modification; protein lipoylation via endogenous pathway; protein N(6)-(lipoyl)lysine from octanoyl-[acyl-carrier-protein]: step 1/2. Functionally, catalyzes the transfer of endogenously produced octanoic acid from octanoyl-acyl-carrier-protein onto the lipoyl domains of lipoate-dependent enzymes. Lipoyl-ACP can also act as a substrate although octanoyl-ACP is likely to be the physiological substrate. This is Octanoyltransferase from Shewanella loihica (strain ATCC BAA-1088 / PV-4).